The sequence spans 443 residues: Toxin YjjJ (443 aa).

Asp-342 serves as the catalytic Proton acceptor.

Belongs to the HipA Ser/Thr kinase family.

Functionally, toxic when overexpressed in E.coli, leading to long filamentous cells. The toxic effect is neutralized by non-cognate antitoxin HipB. Does not seem to inhibit DNA, RNA or protein synthesis, and unlike paralogous toxin HipA its toxic activity is not counteracted by overexpression of GltX. Binds DNA. Might be a protein kinase. In Escherichia coli (strain K12), this protein is Toxin YjjJ (yjjJ).